The following is a 393-amino-acid chain: Pre-mRNA splicing factor SR-like 1 (393 aa).

A disordered region spans residues 173-393 (MNLPTKPSGS…VIKLGGSSWR (221 aa)). Basic and acidic residues predominate over residues 249 to 312 (QSRDYYSDRD…RNDYEDDRSR (64 aa)). Positions 301 to 308 (SRRNDYED) match the Nuclear localization signal motif. Residues 313–325 (HDRRSRSRSRSRS) show a composition bias toward basic residues. 2 stretches are compositionally biased toward basic and acidic residues: residues 329–346 (QIEREPTPKRDSSNKEKS) and 356–385 (KLKDLYGDASSQKRDEGFGTRKDSSSEEVI).

The protein belongs to the PRP38 family. In terms of processing, phosphorylated. Mostly expressed in siliques and leaves, also present in seedlings, flowers and stems, and, at low levels, in roots.

It is found in the nucleus. In terms of biological role, may be required for pre-mRNA splicing. Confers salt tolerance to LiCl and NaCl. This Arabidopsis thaliana (Mouse-ear cress) protein is Pre-mRNA splicing factor SR-like 1.